Consider the following 32-residue polypeptide: Cyclotide Hyfl-B (32 aa).

Positions 1–32 (GSPIQCAETCFIGKCYTEELGCTCTAFLCMKN) form a cross-link, cyclopeptide (Gly-Asn). 3 disulfides stabilise this stretch: cysteine 6-cysteine 22, cysteine 10-cysteine 24, and cysteine 15-cysteine 29.

This sequence belongs to the cyclotide family. Moebius subfamily. In terms of processing, this is a cyclic peptide.

In terms of biological role, probably participates in a plant defense mechanism. The sequence is that of Cyclotide Hyfl-B from Hybanthus floribundus (Greenviolet).